An 868-amino-acid polypeptide reads, in one-letter code: Translation initiation factor IF-2 (868 aa).

Disordered stretches follow at residues 49-72 (LSKQHGSAAEPTRMTLKRKTTSTL) and 92-276 (KRSD…EHLK). Over residues 92 to 240 (KRSDIEEQQR…KKAEAEEVHL (149 aa)) the composition is skewed to basic and acidic residues. The tr-type G domain occupies 368–537 (SRAPVVTIMG…VLQSELLDLQ (170 aa)). Residues 377–384 (GHVDHGKT) are G1. A GTP-binding site is contributed by 377–384 (GHVDHGKT). The G2 stretch occupies residues 402–406 (GITQH). A G3 region spans residues 423 to 426 (DTPG). GTP-binding positions include 423 to 427 (DTPGH) and 477 to 480 (NKMD). The G4 stretch occupies residues 477 to 480 (NKMD). The tract at residues 513–515 (SAK) is G5.

This sequence belongs to the TRAFAC class translation factor GTPase superfamily. Classic translation factor GTPase family. IF-2 subfamily.

The protein localises to the cytoplasm. In terms of biological role, one of the essential components for the initiation of protein synthesis. Protects formylmethionyl-tRNA from spontaneous hydrolysis and promotes its binding to the 30S ribosomal subunits. Also involved in the hydrolysis of GTP during the formation of the 70S ribosomal complex. The chain is Translation initiation factor IF-2 from Alteromonas mediterranea (strain DSM 17117 / CIP 110805 / LMG 28347 / Deep ecotype).